We begin with the raw amino-acid sequence, 616 residues long: Chaperone protein HscA homolog (616 aa).

Belongs to the heat shock protein 70 family.

In terms of biological role, chaperone involved in the maturation of iron-sulfur cluster-containing proteins. Has a low intrinsic ATPase activity which is markedly stimulated by HscB. This Aliivibrio fischeri (strain MJ11) (Vibrio fischeri) protein is Chaperone protein HscA homolog.